Reading from the N-terminus, the 63-residue chain is uncharacterized protein (63 aa).

Its subcellular location is the mitochondrion. This is an uncharacterized protein from Marchantia polymorpha (Common liverwort).